We begin with the raw amino-acid sequence, 899 residues long: Translation initiation factor IF-2 (899 aa).

2 disordered regions span residues 31–227 (KKAE…ATEQ) and 240–310 (VTTS…GFDK). Composition is skewed to polar residues over residues 36–47 (NVSQTEKQSLLS) and 73–87 (STLS…SKSV). Basic and acidic residues-rich tracts occupy residues 101 to 173 (SALE…EKAK), 181 to 219 (AKSE…ETNE), and 247 to 261 (RAAE…ETTG). A compositionally biased stretch (polar residues) spans 296–308 (PQVNAPTSMQQGF). A tr-type G domain is found at 398–565 (SRAPVVTIMG…AILLQSEILE (168 aa)). The G1 stretch occupies residues 407-414 (GHVDHGKT). 407-414 (GHVDHGKT) serves as a coordination point for GTP. A G2 region spans residues 432 to 436 (GITQH). The G3 stretch occupies residues 453-456 (DTPG). GTP is bound by residues 453–457 (DTPGH) and 507–510 (NKID). Residues 507–510 (NKID) form a G4 region. A G5 region spans residues 543-545 (SAK).

The protein belongs to the TRAFAC class translation factor GTPase superfamily. Classic translation factor GTPase family. IF-2 subfamily.

The protein localises to the cytoplasm. Functionally, one of the essential components for the initiation of protein synthesis. Protects formylmethionyl-tRNA from spontaneous hydrolysis and promotes its binding to the 30S ribosomal subunits. Also involved in the hydrolysis of GTP during the formation of the 70S ribosomal complex. The protein is Translation initiation factor IF-2 of Photobacterium profundum (strain SS9).